The chain runs to 280 residues: 4-diphosphocytidyl-2-C-methyl-D-erythritol kinase (280 aa).

The active site involves Lys-8. Residue 91-101 (PVSAGLAGGST) coordinates ATP. Residue Asp-133 is part of the active site.

Belongs to the GHMP kinase family. IspE subfamily.

It catalyses the reaction 4-CDP-2-C-methyl-D-erythritol + ATP = 4-CDP-2-C-methyl-D-erythritol 2-phosphate + ADP + H(+). It functions in the pathway isoprenoid biosynthesis; isopentenyl diphosphate biosynthesis via DXP pathway; isopentenyl diphosphate from 1-deoxy-D-xylulose 5-phosphate: step 3/6. In terms of biological role, catalyzes the phosphorylation of the position 2 hydroxy group of 4-diphosphocytidyl-2C-methyl-D-erythritol. The sequence is that of 4-diphosphocytidyl-2-C-methyl-D-erythritol kinase from Clostridium botulinum (strain Alaska E43 / Type E3).